Here is a 537-residue protein sequence, read N- to C-terminus: Autophagy-related protein 18 (537 aa).

Positions 184-230 (SEYLDKGTEPLTDSSKAGADLNSVKASTETTISPGKEHSAGSGLNAT) are disordered. Residues 207 to 216 (VKASTETTIS) are compositionally biased toward polar residues. WD repeat units follow at residues 257–297 (AHKG…KVYQ) and 302–341 (TYPT…AENS). The L/FRRG motif motif lies at 298 to 302 (FRRGT). The span at 338–347 (AENSSAAATN) shows a compositional bias: low complexity. The disordered stretch occupies residues 338-411 (AENSSAAATN…RMIRKSSQNL (74 aa)). Residues 348–369 (SDDDEGEADSDDGADDDGVGDS) are compositionally biased toward acidic residues. Polar residues predominate over residues 374 to 386 (STVSIESFDNGSH). A compositionally biased stretch (basic and acidic residues) spans 387 to 397 (QTREPIVDSSR).

This sequence belongs to the WD repeat PROPPIN family. In terms of assembly, component of the PI(3,5)P2 regulatory complex.

It is found in the preautophagosomal structure membrane. Its subcellular location is the vacuole membrane. The protein resides in the endosome membrane. Functionally, the PI(3,5)P2 regulatory complex regulates both the synthesis and turnover of phosphatidylinositol 3,5-bisphosphate (PtdIns(3,5)P2). Necessary for proper vacuole morphology. Plays an important role in osmotically-induced vacuole fragmentation. Required for cytoplasm to vacuole transport (Cvt) vesicle formation, pexophagy and starvation-induced autophagy. Involved in correct ATG9 trafficking to the pre-autophagosomal structure. Might also be involved in premeiotic DNA replication. The protein is Autophagy-related protein 18 (ATG18) of Eremothecium gossypii (strain ATCC 10895 / CBS 109.51 / FGSC 9923 / NRRL Y-1056) (Yeast).